The primary structure comprises 204 residues: High frequency lysogenization protein HflD homolog (204 aa).

Belongs to the HflD family.

Its subcellular location is the cytoplasm. It localises to the cell inner membrane. This Xanthomonas euvesicatoria pv. vesicatoria (strain 85-10) (Xanthomonas campestris pv. vesicatoria) protein is High frequency lysogenization protein HflD homolog.